The primary structure comprises 499 residues: Maturase K (499 aa).

Belongs to the intron maturase 2 family. MatK subfamily.

The protein localises to the plastid. The protein resides in the chloroplast. Usually encoded in the trnK tRNA gene intron. Probably assists in splicing its own and other chloroplast group II introns. The sequence is that of Maturase K from Camellia sasanqua (Christmas camellia).